The chain runs to 422 residues: 5'-deoxyadenosine deaminase (422 aa).

Zn(2+) contacts are provided by His-57 and His-59. Substrate-binding residues include Glu-86 and His-178. His-205 contacts Zn(2+). Glu-208 and Asp-294 together coordinate substrate. Asp-294 provides a ligand contact to Zn(2+).

It belongs to the metallo-dependent hydrolases superfamily. MTA/SAH deaminase family. In terms of assembly, homotetramer. Zn(2+) serves as cofactor.

It carries out the reaction 5'-deoxyadenosine + H2O + H(+) = 5'-deoxyinosine + NH4(+). The catalysed reaction is S-adenosyl-L-homocysteine + H2O + H(+) = S-inosyl-L-homocysteine + NH4(+). It catalyses the reaction S-methyl-5'-thioadenosine + H2O + H(+) = S-methyl-5'-thioinosine + NH4(+). The enzyme catalyses adenosine + H2O + H(+) = inosine + NH4(+). It functions in the pathway amino-acid biosynthesis; S-adenosyl-L-methionine biosynthesis. In terms of biological role, catalyzes the deamination of three SAM-derived enzymatic products, namely 5'-deoxyadenosine, S-adenosyl-L-homocysteine, and 5'-methylthioadenosine, to produce the inosine analogs. Can also deaminate adenosine. The preferred substrate for this enzyme is 5'-deoxyadenosine, but all these substrates are efficiently deaminated. Likely functions in a S-adenosyl-L-methionine (SAM) recycling pathway from S-adenosyl-L-homocysteine (SAH) produced from SAM-dependent methylation reactions. May also be involved in the recycling of 5'-deoxyadenosine, whereupon the 5'-deoxyribose moiety of 5'-deoxyinosine is further metabolized to deoxyhexoses used for the biosynthesis of aromatic amino acids in methanogens. The chain is 5'-deoxyadenosine deaminase from Methanococcus maripaludis (strain C6 / ATCC BAA-1332).